The sequence spans 500 residues: Plexin domain-containing protein 1 (500 aa).

The signal sequence occupies residues 1 to 18 (MRGELWLLVLVLREAARA). The Extracellular portion of the chain corresponds to 19 to 426 (LSPQPGAGHD…TKGTPVHLGT (408 aa)). Disordered regions lie at residues 20–39 (SPQP…AAKG) and 46–78 (RRAR…DTLP). O-linked (Xyl...) (chondroitin sulfate) serine glycosylation is present at S33. Positions 47–60 (RARESPGHVSEPDR) are enriched in basic and acidic residues. N80 and N197 each carry an N-linked (GlcNAc...) asparagine glycan. The segment at 359–379 (FQDEDHDSASPDTSFSPYDGD) is disordered. Residues 368–379 (SPDTSFSPYDGD) are compositionally biased toward polar residues. A helical membrane pass occupies residues 427–447 (IVGIVLAVLLVAAIILAGIYI). Topologically, residues 448-500 (NGHPTSNAALFFIERRPHHWPAMKFRSHPDHSTYAEVEPSGHEKEGFMEAEQC) are cytoplasmic. The span at 479–494 (STYAEVEPSGHEKEGF) shows a compositional bias: basic and acidic residues. The segment at 479-500 (STYAEVEPSGHEKEGFMEAEQC) is disordered.

This sequence belongs to the plexin family. As to quaternary structure, interacts with NID1. May interact with CTTN. In terms of processing, N-glycosylated. In terms of tissue distribution, detected in urine (at protein level). Detected in endothelial cells from colorectal cancer, and in endothelial cells from primary cancers of the lung, liver, pancreas, breast and brain. Not detectable in endothelial cells from normal tissue. Expressed in fibrovascular membrane with increased expression in individuals with proliferative diabetic retinopathy.

Its subcellular location is the secreted. It localises to the cell membrane. The protein localises to the cell junction. It is found in the tight junction. The protein resides in the cytoplasm. Its function is as follows. Plays a critical role in endothelial cell capillary morphogenesis. The sequence is that of Plexin domain-containing protein 1 (PLXDC1) from Homo sapiens (Human).